Consider the following 58-residue polypeptide: Small ribosomal subunit protein bS21 (58 aa).

The segment at 37–58 (FYEKPSVKRKKKSEAARKRKKF) is disordered. Basic residues predominate over residues 43-58 (VKRKKKSEAARKRKKF).

Belongs to the bacterial ribosomal protein bS21 family.

This is Small ribosomal subunit protein bS21 from Enterococcus faecalis (strain ATCC 700802 / V583).